Consider the following 497-residue polypeptide: Cytochrome P450 monooxygenase 151 (497 aa).

A helical transmembrane segment spans residues 1 to 21 (MTDLVPVYYAFAGVVAALLFY). Residues asparagine 292 and asparagine 397 are each glycosylated (N-linked (GlcNAc...) asparagine). Cysteine 441 contributes to the heme binding site.

This sequence belongs to the cytochrome P450 family. Heme is required as a cofactor.

The protein resides in the membrane. The protein operates within secondary metabolite biosynthesis. Functionally, cytochrome P450 monooxygenase that is able to use dehydroabietic acid and testosterone as substrates for oxidation, suggesting that the natural substrate(s) may be structurally related to steroid compounds. The protein is Cytochrome P450 monooxygenase 151 of Postia placenta (strain ATCC 44394 / Madison 698-R) (Brown rot fungus).